Here is a 189-residue protein sequence, read N- to C-terminus: Putative manganese efflux pump MntP (189 aa).

A run of 6 helical transmembrane segments spans residues 6-26 (IFGIAVALAMDAFAVSIAAGV), 39-59 (LAWHFGLFQALMPIVGWYAGL), 71-91 (WIAFFLLAFVSFNMIRESFDA), 106-126 (LVLLSIATSIDALAVGLSLSV), 131-151 (VWMPATVIGITAAVFTVGGLM), and 169-189 (VGAGVLLFIGLRILYAHGVFY).

Belongs to the MntP (TC 9.B.29) family.

It is found in the cell inner membrane. Functionally, probably functions as a manganese efflux pump. This chain is Putative manganese efflux pump MntP, found in Desulfosudis oleivorans (strain DSM 6200 / JCM 39069 / Hxd3) (Desulfococcus oleovorans).